The following is a 250-amino-acid chain: U6 snRNA phosphodiesterase 1 (250 aa).

The tract at residues 1 to 31 is disordered; the sequence is MALVSYSSSEEDEGETSEPPGRRLPPLPPPT. Positions 22 to 31 are enriched in pro residues; the sequence is RRLPPLPPPT. The active-site Proton acceptor is the His105. An AMP-binding site is contributed by 105 to 107; the sequence is HIS. Residues Gln149, Tyr187, and 191–195 contribute to the UMP site; that span reads SFHVS. AMP-binding positions include Tyr187 and 189-195; that span reads EPSFHVS. The active-site Proton donor is His193.

The protein belongs to the 2H phosphoesterase superfamily. USB1 family.

Its subcellular location is the nucleus. It catalyses the reaction a 3'-end uridylyl-uridine-RNA = a 3'-end 2',3'-cyclophospho-uridine-RNA + uridine. The enzyme catalyses a 3'-end uridylyl-adenosine-RNA = a 3'-end 2',3'-cyclophospho-uridine-RNA + adenosine. Functionally, 3'-5' RNA exonuclease that trims the 3' end of oligo(U) and oligo(A) tracts of the pre-U6 small nuclear RNA (snRNA) molecule, leading to the formation of a mature U6 snRNA 3' end-terminated with a 2',3'-cyclic phosphate. Participates in the U6 snRNA 3' end processing that prevents U6 snRNA degradation. In addition also removes uridines from the 3' end of U6atac snRNA and possibly the vault RNA VTRNA1-1. In Xenopus laevis (African clawed frog), this protein is U6 snRNA phosphodiesterase 1.